The chain runs to 703 residues: Serotransferrin (703 aa).

An N-terminal signal peptide occupies residues 1 to 19 (MDLSLHVALCLGMLALCLA). 2 Transferrin-like domains span residues 27–341 (VRWC…ALKE) and 354–686 (VRWC…SLNK). 2 cysteine pairs are disulfide-bonded: C30/C65 and C40/C56. Fe(3+)-binding residues include D80 and Y112. 3 disulfides stabilise this stretch: C135-C218, C180-C193, and C246-C260. Residues T137, K141, A143, and G144 each coordinate hydrogencarbonate. Position 212 (Y212) interacts with Fe(3+). H268 provides a ligand contact to Fe(3+). Residues 341–350 (EGVKEDDLAA) are connecting region. Cystine bridges form between C357/C389 and C367/C380. Residues D404 and Y443 each coordinate Fe(3+). 7 disulfide bridges follow: C414-C698, C432-C659, C466-C545, C490-C687, C500-C514, C511-C528, and C585-C599. Residues T468, R472, A474, and G475 each coordinate hydrogencarbonate. Residue Y539 participates in Fe(3+) binding. H607 is a Fe(3+) binding site.

It belongs to the transferrin family. In terms of assembly, monomer. Plasma.

The protein localises to the secreted. Its function is as follows. Transferrins are iron binding transport proteins which can bind two Fe(3+) ions in association with the binding of an anion, usually bicarbonate. It is responsible for the transport of iron from sites of absorption and heme degradation to those of storage and utilization. Serum transferrin may also have a further role in stimulating cell proliferation. The polypeptide is Serotransferrin (tf) (Xenopus tropicalis (Western clawed frog)).